The following is a 119-amino-acid chain: Large ribosomal subunit protein bL20 (119 aa).

The protein belongs to the bacterial ribosomal protein bL20 family.

Its function is as follows. Binds directly to 23S ribosomal RNA and is necessary for the in vitro assembly process of the 50S ribosomal subunit. It is not involved in the protein synthesizing functions of that subunit. The chain is Large ribosomal subunit protein bL20 from Clostridium acetobutylicum (strain ATCC 824 / DSM 792 / JCM 1419 / IAM 19013 / LMG 5710 / NBRC 13948 / NRRL B-527 / VKM B-1787 / 2291 / W).